The chain runs to 493 residues: Cardiolipin synthase 1 (493 aa).

Helical transmembrane passes span 13-33 (FTIILAIGFIINLVLAFIIIF) and 45-65 (WAWLFVLFVLPLIGFILYLFF). PLD phosphodiesterase domains lie at 228-255 (MNNRNHRKIIVIDGQLGYVGGFNIGDEY) and 406-433 (ENGFIHSKMCLIDDEIVSVGTANMDFRS). Active-site residues include His-233, Lys-235, Asp-240, His-411, Lys-413, and Asp-418.

The protein belongs to the phospholipase D family. Cardiolipin synthase subfamily.

The protein localises to the cell membrane. It carries out the reaction 2 a 1,2-diacyl-sn-glycero-3-phospho-(1'-sn-glycerol) = a cardiolipin + glycerol. Catalyzes the reversible phosphatidyl group transfer from one phosphatidylglycerol molecule to another to form cardiolipin (CL) (diphosphatidylglycerol) and glycerol. The sequence is that of Cardiolipin synthase 1 (cls1) from Staphylococcus aureus (strain COL).